Here is a 79-residue protein sequence, read N- to C-terminus: Translational regulator CsrA (79 aa).

The protein belongs to the CsrA/RsmA family. In terms of assembly, homodimer; the beta-strands of each monomer intercalate to form a hydrophobic core, while the alpha-helices form wings that extend away from the core.

It is found in the cytoplasm. Functionally, a translational regulator that binds mRNA to regulate translation initiation and/or mRNA stability. Usually binds in the 5'-UTR at or near the Shine-Dalgarno sequence preventing ribosome-binding, thus repressing translation. Its main target seems to be the major flagellin gene, while its function is anatagonized by FliW. This chain is Translational regulator CsrA, found in Helicobacter hepaticus (strain ATCC 51449 / 3B1).